A 120-amino-acid polypeptide reads, in one-letter code: UPF0231 protein Spro_4007 (120 aa).

This sequence belongs to the UPF0231 family.

The sequence is that of UPF0231 protein Spro_4007 from Serratia proteamaculans (strain 568).